A 155-amino-acid polypeptide reads, in one-letter code: Interleukin-2 (155 aa).

The N-terminal stretch at 1–20 is a signal peptide; it reads MYKMQLLSCIALTLVLVANS. Residue Thr-24 is glycosylated (O-linked (GalNAc...) threonine). A disulfide bridge links Cys-79 with Cys-127. The N-linked (GlcNAc...) asparagine glycan is linked to Asn-112.

It belongs to the IL-2 family.

Its subcellular location is the secreted. Cytokine produced by activated CD4-positive helper T-cells and to a lesser extend activated CD8-positive T-cells and natural killer (NK) cells that plays pivotal roles in the immune response and tolerance. Binds to a receptor complex composed of either the high-affinity trimeric IL-2R (IL2RA/CD25, IL2RB/CD122 and IL2RG/CD132) or the low-affinity dimeric IL-2R (IL2RB and IL2RG). Interaction with the receptor leads to oligomerization and conformation changes in the IL-2R subunits resulting in downstream signaling starting with phosphorylation of JAK1 and JAK3. In turn, JAK1 and JAK3 phosphorylate the receptor to form a docking site leading to the phosphorylation of several substrates including STAT5. This process leads to activation of several pathways including STAT, phosphoinositide-3-kinase/PI3K and mitogen-activated protein kinase/MAPK pathways. Functions as a T-cell growth factor and can increase NK-cell cytolytic activity as well. Promotes strong proliferation of activated B-cells and subsequently immunoglobulin production. Plays a pivotal role in regulating the adaptive immune system by controlling the survival and proliferation of regulatory T-cells, which are required for the maintenance of immune tolerance. Moreover, participates in the differentiation and homeostasis of effector T-cell subsets, including Th1, Th2, Th17 as well as memory CD8-positive T-cells. The sequence is that of Interleukin-2 (IL2) from Canis lupus familiaris (Dog).